The sequence spans 1340 residues: DNA-directed RNA polymerase subunit beta (1340 aa).

This sequence belongs to the RNA polymerase beta chain family. In terms of assembly, the RNAP catalytic core consists of 2 alpha, 1 beta, 1 beta' and 1 omega subunit. When a sigma factor is associated with the core the holoenzyme is formed, which can initiate transcription.

It carries out the reaction RNA(n) + a ribonucleoside 5'-triphosphate = RNA(n+1) + diphosphate. Its function is as follows. DNA-dependent RNA polymerase catalyzes the transcription of DNA into RNA using the four ribonucleoside triphosphates as substrates. The sequence is that of DNA-directed RNA polymerase subunit beta from Baumannia cicadellinicola subsp. Homalodisca coagulata.